Consider the following 525-residue polypeptide: Probable malate:quinone oxidoreductase (525 aa).

It belongs to the MQO family. Requires FAD as cofactor.

It carries out the reaction (S)-malate + a quinone = a quinol + oxaloacetate. The protein operates within carbohydrate metabolism; tricarboxylic acid cycle; oxaloacetate from (S)-malate (quinone route): step 1/1. This is Probable malate:quinone oxidoreductase from Serratia proteamaculans (strain 568).